The following is a 425-amino-acid chain: Acyl-lipid (8-3)-desaturase (425 aa).

The disordered stretch occupies residues 1-25; sequence MPPRDSYSYAAPPSAQLHEVDTPQE. Residues 18–93 enclose the Cytochrome b5 heme-binding domain; it reads HEVDTPQEHD…SRPVHKGYSP (76 aa). Heme contacts are provided by H47 and H69. A helical transmembrane segment spans residues 134 to 154; the sequence is VAGAALIWHGYTFAGIAMLGV. The Histidine box-1 signature appears at 164-168; the sequence is HEGGH. The chain crosses the membrane as a helical span at residues 175–197; that stretch reads IAFDRAIQVACYGLGCGMSGAWW. Positions 201–206 match the Histidine box-2 motif; it reads HNKHHA. 2 consecutive transmembrane segments (helical) span residues 241–261 and 297–317; these read WLSM…ALGW and GAGY…MYIF. The Histidine box-3 signature appears at 365–369; sequence QIEHH.

It belongs to the fatty acid desaturase type 1 family. It depends on Fe(2+) as a cofactor.

It is found in the membrane. The catalysed reaction is an (8Z,11Z,14Z)-icosatrienoyl-containing glycerolipid + 2 Fe(II)-[cytochrome b5] + O2 + 2 H(+) = (5Z,8Z,11Z,14Z)-eicosatetraenoyl-containing glycerolipid + 2 Fe(III)-[cytochrome b5] + 2 H2O. It carries out the reaction an (8Z,11Z,14Z,17Z)-eicosatetraenoyl-containing glycerolipid + 2 Fe(II)-[cytochrome b5] + O2 + 2 H(+) = a (5Z,8Z,11Z,14Z,17Z)-eicosapentaenoyl-containing glycerolipid + 2 Fe(III)-[cytochrome b5] + 2 H2O. In terms of biological role, fatty acid desaturase that introduces a cis double bond at the 5-position in 20-carbon polyunsaturated fatty acids incorporated in a glycerolipid that contain a Delta(8) double bond. The polypeptide is Acyl-lipid (8-3)-desaturase (Rebecca salina (Marine microalga)).